Reading from the N-terminus, the 325-residue chain is Intelectin (325 aa).

The N-terminal stretch at 1–23 (MKYCVLLIMIHLLLVELPQFPEA) is a signal peptide. The Fibrinogen C-terminal domain maps to 44–266 (IRSSYIGRSC…AAMAICSGVK (223 aa)). Residues C53 and C82 are joined by a disulfide bond. Positions 98, 99, 101, 104, 109, 110, 145, 274, 286, and 294 each coordinate Ca(2+). Intrachain disulfides connect C106–C292 and C262–C277. A carbohydrate-binding positions include 274-275 (EH) and E286.

Expressed at high levels in caudal kidney, liver, and swim bladder. Also expressed in gill, spleen, intestine and head kidney. Not detected in heart.

Functionally, may be involved in innate immune surveillance. May specifically recognize carbohydrate chains of pathogens and bacterial components in a calcium-dependent manner. In vitro binds N-acetylglucosamine residues. The chain is Intelectin from Oncorhynchus mykiss (Rainbow trout).